A 258-amino-acid polypeptide reads, in one-letter code: Indole-3-glycerol phosphate synthase (258 aa).

Belongs to the TrpC family.

It catalyses the reaction 1-(2-carboxyphenylamino)-1-deoxy-D-ribulose 5-phosphate + H(+) = (1S,2R)-1-C-(indol-3-yl)glycerol 3-phosphate + CO2 + H2O. Its pathway is amino-acid biosynthesis; L-tryptophan biosynthesis; L-tryptophan from chorismate: step 4/5. The sequence is that of Indole-3-glycerol phosphate synthase from Geobacillus kaustophilus (strain HTA426).